A 398-amino-acid chain; its full sequence is Type II secretion system protein L (398 aa).

At 1–248 the chain is on the cytoplasmic side; the sequence is MNNHHTSSAA…RQPTPRRWRP (248 aa). A helical membrane pass occupies residues 249–265; the sequence is VIVAALALLLLWSSNCL. Topologically, residues 266–398 are periplasmic; the sequence is HDHLMLGQQA…GRLTLEGNDA (133 aa).

Belongs to the GSP L family. As to quaternary structure, type II secretion system is composed of four main components: the outer membrane complex, the inner membrane complex, the cytoplasmic secretion ATPase and the periplasm-spanning pseudopilus. Forms homodimers. Interacts with PulM/GspM. Interacts with PulE/GspE and PulF/GspF.

Its subcellular location is the cell inner membrane. Functionally, inner membrane component of the type II secretion system required for the energy-dependent secretion of extracellular factors such as proteases and toxins from the periplasm. Plays a role in the complex assembly and recruits PulM resulting in a stable complex in the inner membrane. Provides thus a link between the energy-providing PulE protein in the cytoplasm and the rest of the T2SS machinery. This chain is Type II secretion system protein L (pulL), found in Klebsiella pneumoniae.